Here is an 874-residue protein sequence, read N- to C-terminus: Alanine--tRNA ligase (874 aa).

The Zn(2+) site is built by His-562, His-566, Cys-664, and His-668.

It belongs to the class-II aminoacyl-tRNA synthetase family. Zn(2+) is required as a cofactor.

The protein resides in the cytoplasm. It carries out the reaction tRNA(Ala) + L-alanine + ATP = L-alanyl-tRNA(Ala) + AMP + diphosphate. Functionally, catalyzes the attachment of alanine to tRNA(Ala) in a two-step reaction: alanine is first activated by ATP to form Ala-AMP and then transferred to the acceptor end of tRNA(Ala). Also edits incorrectly charged Ser-tRNA(Ala) and Gly-tRNA(Ala) via its editing domain. This chain is Alanine--tRNA ligase, found in Shewanella loihica (strain ATCC BAA-1088 / PV-4).